Here is a 260-residue protein sequence, read N- to C-terminus: IGAGVSGLLGFATVASADEAEHGLECPSYPWPHAGILSSYDHASIRRGHQVYQQVCASCHSMSLVSYRDLVGVAYTEEEVKAMAAEIEVEDGPNDEGEMFTRPGKLSDRFPQPYPNEAAARFANGGAYPPDLSLITKARHNGQNYVFALLTAYRDPPAGVSIREGLHYNPYFPGGAIAMPKMLNDGAVEYEDGVPATEAQMGKDVVSFLTWAAEPEMEERKLMGFKWIFVLSLALLQAAYYRRLRWSVLKSRKLVLDVVN.

The N-terminal 17 residues, 1–17 (IGAGVSGLLGFATVASA), are a transit peptide targeting the mitochondrion. At 18 to 221 (DEAEHGLECP…AAEPEMEERK (204 aa)) the chain is on the mitochondrial intermembrane side. A Cytochrome c domain is found at 43–150 (ASIRRGHQVY…NGQNYVFALL (108 aa)). Cys56, Cys59, His60, and Met179 together coordinate heme c. Residues 222-241 (LMGFKWIFVLSLALLQAAYY) traverse the membrane as a helical segment. The Mitochondrial matrix segment spans residues 242 to 260 (RRLRWSVLKSRKLVLDVVN).

This sequence belongs to the cytochrome c family. Component of the ubiquinol-cytochrome c oxidoreductase (cytochrome b-c1 complex, complex III, CIII), a multisubunit enzyme composed of 3 respiratory subunits cytochrome b, cytochrome c1 and Rieske protein, 2 core protein subunits, and additional low-molecular weight protein subunits. The complex exists as an obligatory dimer and forms supercomplexes (SCs) in the inner mitochondrial membrane with cytochrome c oxidase (complex IV, CIV). It depends on heme c as a cofactor. In terms of tissue distribution, in all tissues analyzed.

The protein resides in the mitochondrion inner membrane. It carries out the reaction a quinol + 2 Fe(III)-[cytochrome c](out) = a quinone + 2 Fe(II)-[cytochrome c](out) + 2 H(+)(out). Component of the ubiquinol-cytochrome c oxidoreductase, a multisubunit transmembrane complex that is part of the mitochondrial electron transport chain which drives oxidative phosphorylation. The respiratory chain contains 3 multisubunit complexes succinate dehydrogenase (complex II, CII), ubiquinol-cytochrome c oxidoreductase (cytochrome b-c1 complex, complex III, CIII) and cytochrome c oxidase (complex IV, CIV), that cooperate to transfer electrons derived from NADH and succinate to molecular oxygen, creating an electrochemical gradient over the inner membrane that drives transmembrane transport and the ATP synthase. The cytochrome b-c1 complex catalyzes electron transfer from ubiquinol to cytochrome c, linking this redox reaction to translocation of protons across the mitochondrial inner membrane, with protons being carried across the membrane as hydrogens on the quinol. In the process called Q cycle, 2 protons are consumed from the matrix, 4 protons are released into the intermembrane space and 2 electrons are passed to cytochrome c. Cytochrome c1 is a catalytic core subunit containing a c-type heme. It transfers electrons from the [2Fe-2S] iron-sulfur cluster of the Rieske protein to cytochrome c. This Solanum tuberosum (Potato) protein is Cytochrome c1-2, heme protein, mitochondrial (CYCL).